The primary structure comprises 240 residues: Aldehyde dehydrogenase, cytosolic 2 (240 aa).

Residues glutamate 8 and cysteine 42 contribute to the active site. Residues lysine 106, lysine 149, lysine 151, and lysine 174 each carry the N6-acetyllysine modification.

This sequence belongs to the aldehyde dehydrogenase family. As to quaternary structure, homotetramer. As to expression, non-lens specific, predominant form expressed in the liver.

The protein localises to the cytoplasm. It catalyses the reaction an aldehyde + NAD(+) + H2O = a carboxylate + NADH + 2 H(+). Its pathway is alcohol metabolism; ethanol degradation; acetate from ethanol: step 2/2. Its function is as follows. Elephant shrews, in contrast to other mammals, possess both a lens- and a non-lens specific class-1 aldehyde dehydrogenase. Can convert/oxidize retinaldehyde to retinoic acid. This is Aldehyde dehydrogenase, cytosolic 2 from Macroscelides proboscideus (Short-eared elephant shrew).